The sequence spans 185 residues: Inner membrane lipoprotein DcrB (185 aa).

Positions 1 to 19 (MRNLVKYVGIGLLVMGLAA) are cleaved as a signal peptide. Cys-20 carries N-palmitoyl cysteine lipidation. Cys-20 carries S-diacylglycerol cysteine lipidation.

This sequence belongs to the DcrB family.

It localises to the cell membrane. In terms of biological role, plays a role in cell envelope biogenesis, maintenance of cell envelope integrity and membrane homeostasis. Essential for lipoprotein maturation under conditions where membrane fluidity may be altered. This is Inner membrane lipoprotein DcrB from Shigella flexneri.